The primary structure comprises 409 residues: Arginine biosynthesis bifunctional protein ArgJ (409 aa).

Substrate is bound by residues Thr-165, Lys-191, Thr-202, Glu-282, Asn-404, and Thr-409. Catalysis depends on Thr-202, which acts as the Nucleophile.

The protein belongs to the ArgJ family. Heterotetramer of two alpha and two beta chains.

It localises to the cytoplasm. It carries out the reaction N(2)-acetyl-L-ornithine + L-glutamate = N-acetyl-L-glutamate + L-ornithine. The catalysed reaction is L-glutamate + acetyl-CoA = N-acetyl-L-glutamate + CoA + H(+). It participates in amino-acid biosynthesis; L-arginine biosynthesis; L-ornithine and N-acetyl-L-glutamate from L-glutamate and N(2)-acetyl-L-ornithine (cyclic): step 1/1. It functions in the pathway amino-acid biosynthesis; L-arginine biosynthesis; N(2)-acetyl-L-ornithine from L-glutamate: step 1/4. In terms of biological role, catalyzes two activities which are involved in the cyclic version of arginine biosynthesis: the synthesis of N-acetylglutamate from glutamate and acetyl-CoA as the acetyl donor, and of ornithine by transacetylation between N(2)-acetylornithine and glutamate. The polypeptide is Arginine biosynthesis bifunctional protein ArgJ (Parasynechococcus marenigrum (strain WH8102)).